Consider the following 226-residue polypeptide: Ribose-5-phosphate isomerase A (226 aa).

Residues 32–35 (TGST), 85–88 (DGAD), and 98–101 (KGGG) each bind substrate. Glu-107 functions as the Proton acceptor in the catalytic mechanism. Lys-125 serves as a coordination point for substrate.

This sequence belongs to the ribose 5-phosphate isomerase family. As to quaternary structure, homodimer.

It carries out the reaction aldehydo-D-ribose 5-phosphate = D-ribulose 5-phosphate. Its pathway is carbohydrate degradation; pentose phosphate pathway; D-ribose 5-phosphate from D-ribulose 5-phosphate (non-oxidative stage): step 1/1. Catalyzes the reversible conversion of ribose-5-phosphate to ribulose 5-phosphate. This chain is Ribose-5-phosphate isomerase A, found in Saccharophagus degradans (strain 2-40 / ATCC 43961 / DSM 17024).